Here is a 421-residue protein sequence, read N- to C-terminus: WD repeat and SOCS box-containing protein 1 (421 aa).

WD repeat units follow at residues 124 to 165 (SRCV…LLLN), 168 to 208 (DHIE…NMVK), 212 to 251 (AHQN…MIRK), 254 to 293 (GHHH…LLME), and 309 to 346 (ANDR…DCPV). The SOCS box domain occupies 372–421 (DGSVYFWATPRQVPSLQHICRMSIRRVMSTQEVQKLPVPSKILAFLSYRG).

As to quaternary structure, interacts with DIO2. Component of the probable ECS(WSB1) E3 ubiquitin-protein ligase complex which contains CUL5, RNF7/RBX2, Elongin BC complex and WSB1. Component of a probable ECS-like E3 ubiquitin-protein ligase complex which contains CUL5, RBX1, Elongin BC complex and WSB1. Interacts with CUL5, RNF7, ELOB and ELOC. Binds to HIPK2 through WD40 repeats.

The protein operates within protein modification; protein ubiquitination. Functionally, probable substrate-recognition component of a SCF-like ECS (Elongin-Cullin-SOCS-box protein) E3 ubiquitin ligase complex which mediates the ubiquitination and subsequent proteasomal degradation of target proteins. Recognizes type II iodothyronine deiodinase/DIO2. Confers constitutive instability to HIPK2 through proteasomal degradation. The protein is WD repeat and SOCS box-containing protein 1 (Wsb1) of Mus musculus (Mouse).